The chain runs to 414 residues: Serine hydroxymethyltransferase (414 aa).

Residues L121 and 125–127 (GHL) contribute to the (6S)-5,6,7,8-tetrahydrofolate site. The residue at position 229 (K229) is an N6-(pyridoxal phosphate)lysine.

It belongs to the SHMT family. Homodimer. Requires pyridoxal 5'-phosphate as cofactor.

The protein resides in the cytoplasm. It carries out the reaction (6R)-5,10-methylene-5,6,7,8-tetrahydrofolate + glycine + H2O = (6S)-5,6,7,8-tetrahydrofolate + L-serine. The protein operates within one-carbon metabolism; tetrahydrofolate interconversion. Its pathway is amino-acid biosynthesis; glycine biosynthesis; glycine from L-serine: step 1/1. In terms of biological role, catalyzes the reversible interconversion of serine and glycine with tetrahydrofolate (THF) serving as the one-carbon carrier. This reaction serves as the major source of one-carbon groups required for the biosynthesis of purines, thymidylate, methionine, and other important biomolecules. Also exhibits THF-independent aldolase activity toward beta-hydroxyamino acids, producing glycine and aldehydes, via a retro-aldol mechanism. The polypeptide is Serine hydroxymethyltransferase (Herminiimonas arsenicoxydans).